A 401-amino-acid polypeptide reads, in one-letter code: tRNA(Met) cytidine acetate ligase (401 aa).

Residues Ile7–His20, Gly102, Asn164, and Arg189 contribute to the ATP site.

It belongs to the TmcAL family.

The protein localises to the cytoplasm. The enzyme catalyses cytidine(34) in elongator tRNA(Met) + acetate + ATP = N(4)-acetylcytidine(34) in elongator tRNA(Met) + AMP + diphosphate. In terms of biological role, catalyzes the formation of N(4)-acetylcytidine (ac(4)C) at the wobble position of elongator tRNA(Met), using acetate and ATP as substrates. First activates an acetate ion to form acetyladenylate (Ac-AMP) and then transfers the acetyl group to tRNA to form ac(4)C34. The protein is tRNA(Met) cytidine acetate ligase of Thermoanaerobacter sp. (strain X514).